Consider the following 84-residue polypeptide: Small ribosomal subunit protein bS20 (84 aa).

The segment at 1–28 (MPNIKSAIKRVKTADTRNSRNASQRSAM) is disordered.

Belongs to the bacterial ribosomal protein bS20 family.

Binds directly to 16S ribosomal RNA. This Listeria welshimeri serovar 6b (strain ATCC 35897 / DSM 20650 / CCUG 15529 / CIP 8149 / NCTC 11857 / SLCC 5334 / V8) protein is Small ribosomal subunit protein bS20.